The chain runs to 312 residues: 4-hydroxyproline 2-epimerase (312 aa).

The active-site Proton acceptor is cysteine 88. Substrate-binding positions include 89–90 (GH), histidine 208, and aspartate 234. Cysteine 238 serves as the catalytic Proton donor. 239–240 (GT) provides a ligand contact to substrate.

It belongs to the proline racemase family.

It catalyses the reaction trans-4-hydroxy-L-proline = cis-4-hydroxy-D-proline. Catalyzes the epimerization of trans-4-hydroxy-L-proline (t4LHyp) to cis-4-hydroxy-D-proline (c4DHyp). Is likely involved in a degradation pathway that converts t4LHyp to alpha-ketoglutarate. Can also catalyze the epimerization of trans-3-hydroxy-L-proline (t3LHyp) to cis-3-hydroxy-D-proline (c3DHyp), albeit with 500-fold lower efficiency. Displays no proline racemase activity. The protein is 4-hydroxyproline 2-epimerase of Xanthomonas campestris pv. campestris (strain ATCC 33913 / DSM 3586 / NCPPB 528 / LMG 568 / P 25).